Here is a 300-residue protein sequence, read N- to C-terminus: Elongator complex protein 5 (300 aa).

Serine 252 is subject to Phosphoserine. Residues 264-300 form a disordered region; the sequence is QQALLRPRPGQATSHIFYEPDAYDDLDQEDPDDDLDI. Residues 284-300 are compositionally biased toward acidic residues; sequence DAYDDLDQEDPDDDLDI.

It belongs to the ELP5 family. Component of the elongator complex which consists of ELP1, ELP2, ELP3, ELP4, ELP5 and ELP6; in the complex, is required for optimal binding of ELP3 to ELP4. Tyrosine-phosphorylated. As to expression, ubiquitously expressed with high levels in heart, brain, liver, skeletal muscle and testis.

It localises to the nucleus. The protein resides in the cytoplasm. It participates in tRNA modification; 5-methoxycarbonylmethyl-2-thiouridine-tRNA biosynthesis. Component of the elongator complex which is required for multiple tRNA modifications, including mcm5U (5-methoxycarbonylmethyl uridine), mcm5s2U (5-methoxycarbonylmethyl-2-thiouridine), and ncm5U (5-carbamoylmethyl uridine). The elongator complex catalyzes formation of carboxymethyluridine in the wobble base at position 34 in tRNAs. Involved in cell migration. The polypeptide is Elongator complex protein 5 (Homo sapiens (Human)).